Reading from the N-terminus, the 197-residue chain is LexA repressor (197 aa).

The segment at residues Val28–Ile47 is a DNA-binding region (H-T-H motif). Active-site for autocatalytic cleavage activity residues include Ser119 and Lys156.

Belongs to the peptidase S24 family. In terms of assembly, homodimer.

It catalyses the reaction Hydrolysis of Ala-|-Gly bond in repressor LexA.. Functionally, represses a number of genes involved in the response to DNA damage (SOS response), including recA and lexA. In the presence of single-stranded DNA, RecA interacts with LexA causing an autocatalytic cleavage which disrupts the DNA-binding part of LexA, leading to derepression of the SOS regulon and eventually DNA repair. In Thermotoga petrophila (strain ATCC BAA-488 / DSM 13995 / JCM 10881 / RKU-1), this protein is LexA repressor.